The chain runs to 142 residues: Small ribosomal subunit protein uS12 (142 aa).

Belongs to the universal ribosomal protein uS12 family. In terms of assembly, part of the 30S ribosomal subunit.

Its function is as follows. With S4 and S5 plays an important role in translational accuracy. Located at the interface of the 30S and 50S subunits. This Methanoculleus marisnigri (strain ATCC 35101 / DSM 1498 / JR1) protein is Small ribosomal subunit protein uS12.